The following is a 148-amino-acid chain: UPF0756 membrane protein YeaL (148 aa).

Transmembrane regions (helical) follow at residues 14–34 (ALGF…LIIV), 51–71 (LTIG…SGSL), 80–100 (FFNW…WLGG), and 121–141 (VLGV…AGLV).

Belongs to the UPF0756 family.

The protein resides in the cell membrane. The chain is UPF0756 membrane protein YeaL from Escherichia fergusonii (strain ATCC 35469 / DSM 13698 / CCUG 18766 / IAM 14443 / JCM 21226 / LMG 7866 / NBRC 102419 / NCTC 12128 / CDC 0568-73).